Reading from the N-terminus, the 931-residue chain is Ribosome-releasing factor 2, mitochondrial (931 aa).

The tr-type G domain maps to 63–379 (EKTRNIGIIA…AVNNLLPGPS (317 aa)). Residues 72 to 79 (AHIDAGKT), 162 to 166 (DTPGH), and 216 to 219 (NKLD) contribute to the GTP site.

Belongs to the TRAFAC class translation factor GTPase superfamily. Classic translation factor GTPase family. EF-G/EF-2 subfamily.

It localises to the mitochondrion. In terms of biological role, mitochondrial GTPase that mediates the disassembly of ribosomes from messenger RNA at the termination of mitochondrial protein biosynthesis. Not involved in the GTP-dependent ribosomal translocation step during translation elongation. The sequence is that of Ribosome-releasing factor 2, mitochondrial (mef2) from Talaromyces stipitatus (strain ATCC 10500 / CBS 375.48 / QM 6759 / NRRL 1006) (Penicillium stipitatum).